Reading from the N-terminus, the 508-residue chain is Probable G-protein coupled receptor 101 (508 aa).

Residues 1-35 (MTSTCTNSTRESNSSHTCMPLSKMPISLAHGIIRS) are Extracellular-facing. N-linked (GlcNAc...) asparagine glycans are attached at residues N7 and N13. The helical transmembrane segment at 36–56 (TVLVIFLAASFVGNIVLALVL) threads the bilayer. The Cytoplasmic portion of the chain corresponds to 57-68 (QRKPQLLQVTNR). The chain crosses the membrane as a helical span at residues 69 to 89 (FIFNLLVTDLLQISLVAPWVV). The Extracellular portion of the chain corresponds to 90–106 (ATSVPLFWPLNSHFCTA). C104 and C182 are oxidised to a cystine. The helical transmembrane segment at 107–127 (LVSLTHLFAFASVNTIVVVSV) threads the bilayer. Over 128–149 (DRYLSIIHPLSYPSKMTQRRGY) the chain is Cytoplasmic. Residues 150-170 (LLLYGTWIVAILQSTPPLYGW) form a helical membrane-spanning segment. Residues 171-196 (GQAAFDERNALCSMIWGASPSYTILS) are Extracellular-facing. The helical transmembrane segment at 197-217 (VVSFIVIPLIVMIACYSVVFC) threads the bilayer. At 218–399 (AARRQHALLY…PRCYQCKAAK (182 aa)) the chain is on the cytoplasmic side. Residues 244–338 (NEDEEGAEKK…ENSMKADKGR (95 aa)) are disordered. 2 stretches are compositionally biased toward basic and acidic residues: residues 250–288 (AEKK…KAKE) and 318–338 (MEGK…DKGR). A helical transmembrane segment spans residues 400-420 (VIFIIIFSYVLSLGPYCFLAV). Residues 421 to 433 (LAVWVDVETQVPQ) lie on the Extracellular side of the membrane. Residues 434–454 (WVITIIIWLFFLQCCIHPYVY) traverse the membrane as a helical segment. Over 455 to 508 (GYMHKTIKKEIQDMLKKFFCKEKPPKEDSHPDLPGTEGGTEGKIVPSYDSATFP) the chain is Cytoplasmic. The segment covering 476-485 (EKPPKEDSHP) has biased composition (basic and acidic residues). Residues 476 to 508 (EKPPKEDSHPDLPGTEGGTEGKIVPSYDSATFP) are disordered.

Belongs to the G-protein coupled receptor 1 family.

The protein resides in the cell membrane. Orphan receptor. The protein is Probable G-protein coupled receptor 101 (GPR101) of Homo sapiens (Human).